Reading from the N-terminus, the 359-residue chain is Putative B3 domain-containing protein At3g24850 (359 aa).

Disordered stretches follow at residues 92–111 (DSEIEDPQTSDSQMKTLQNS) and 159–192 (EKMETKDPPNPLSLCLTGNTSRKRRAVEERKRTG). Polar residues predominate over residues 100–111 (TSDSQMKTLQNS). The segment at residues 250–351 (FNNLLQNDFL…VLCFAMEQSS (102 aa)) is a DNA-binding region (TF-B3).

Its subcellular location is the nucleus. The sequence is that of Putative B3 domain-containing protein At3g24850 from Arabidopsis thaliana (Mouse-ear cress).